Here is a 190-residue protein sequence, read N- to C-terminus: Large ribosomal subunit protein uL6 (190 aa).

The protein belongs to the universal ribosomal protein uL6 family.

This is Large ribosomal subunit protein uL6 (RpL9) from Spodoptera frugiperda (Fall armyworm).